A 297-amino-acid polypeptide reads, in one-letter code: Ribosomal RNA small subunit methyltransferase A (297 aa).

S-adenosyl-L-methionine is bound by residues asparagine 31, leucine 33, glycine 58, glutamate 79, aspartate 104, and asparagine 129.

It belongs to the class I-like SAM-binding methyltransferase superfamily. rRNA adenine N(6)-methyltransferase family. RsmA subfamily.

It localises to the cytoplasm. It catalyses the reaction adenosine(1518)/adenosine(1519) in 16S rRNA + 4 S-adenosyl-L-methionine = N(6)-dimethyladenosine(1518)/N(6)-dimethyladenosine(1519) in 16S rRNA + 4 S-adenosyl-L-homocysteine + 4 H(+). In terms of biological role, specifically dimethylates two adjacent adenosines (A1518 and A1519) in the loop of a conserved hairpin near the 3'-end of 16S rRNA in the 30S particle. May play a critical role in biogenesis of 30S subunits. This chain is Ribosomal RNA small subunit methyltransferase A, found in Staphylococcus aureus (strain Newman).